The following is a 757-amino-acid chain: Two pore calcium channel protein 1 (757 aa).

At M1–R94 the chain is on the cytoplasmic side. Residues H24–R48 are disordered. Gly residues predominate over residues G29–R45. A helical transmembrane segment spans residues F95–L115. Residues L116–S152 are Extracellular-facing. The helical transmembrane segment at L153–Y173 threads the bilayer. The Cytoplasmic portion of the chain corresponds to E174–K188. A helical transmembrane segment spans residues V189–F209. Residue R210 is a topological domain, extracellular. The chain crosses the membrane as a helical; Voltage-sensor span at residues V211 to R228. The Cytoplasmic portion of the chain corresponds to M229–T233. A helical membrane pass occupies residues L234–F254. Residues A255–K270 lie on the Extracellular side of the membrane. The pore-forming intramembrane region spans T271–I285. Residues L286–L308 lie on the Extracellular side of the membrane. The helical transmembrane segment at F309 to I329 threads the bilayer. Over Y330–R453 the chain is Cytoplasmic. EF-hand domains lie at T347–Y382 and T388–K423. A helical transmembrane segment spans residues S454 to I474. Residues E475–E493 are Extracellular-facing. N482 is a glycosylation site (N-linked (GlcNAc...) asparagine). Residues F494–G514 traverse the membrane as a helical segment. The Cytoplasmic portion of the chain corresponds to A515–K523. The helical transmembrane segment at F524–S544 threads the bilayer. Residues K545–E553 are Extracellular-facing. The helical; Voltage-sensor transmembrane segment at W554 to L571 threads the bilayer. Residues Q572–G595 are Cytoplasmic-facing. The helical transmembrane segment at I596 to V616 threads the bilayer. Residues Y617 to D640 lie on the Extracellular side of the membrane. An intramembrane region (pore-forming) is located at residues Y641–G655. Topologically, residues N656–Y676 are extracellular. A helical transmembrane segment spans residues F677 to L697. The Cytoplasmic segment spans residues E698 to Q757.

This sequence belongs to the calcium channel alpha-1 subunit (TC 1.A.1.11) family. Two pore calcium channel subfamily. As to quaternary structure, homodimer. Expressed in shoot, mature leaf, cultured cells, and at lower level in roots.

Its subcellular location is the membrane. With respect to regulation, inhibited by the VDCC blocker verapamil in yeast cells. Channel activity may be down-regulated by cytosolic Ca(2+) in rice cells. Inhibited by Al(3+). In terms of biological role, may function as one of the major voltage-gated Ca(2+) channel (VDCC) across the plasma membrane. May be involved in the regulation of cytosolic Ca(2+) and in growth and development. Acts as the major ROS-responsive Ca(2+) channel and is the possible target of Al-dependent inhibition. Determines sensitivity to T.viride xylanase elicitor. Plays a regulatory role in elicitor-induced defense responses and hypersensitive cell death. The chain is Two pore calcium channel protein 1 (TPC1) from Oryza sativa subsp. japonica (Rice).